Here is a 330-residue protein sequence, read N- to C-terminus: Taste receptor type 2 member 136 (330 aa).

At 1–32 (MKSQPVTQELHFIFPLFKTISSDIMSFLVSIA) the chain is on the extracellular side. A helical transmembrane segment spans residues 33 to 53 (GIAMLAQIVLGTFANVFIVLV). At 54–73 (TCTDCIRRRKLFLADGILTS) the chain is on the cytoplasmic side. A helical transmembrane segment spans residues 74 to 94 (LAFCRIGMLWVILISWCSIVF). At 95-122 (HQALSLQVRFSICVGWAVTNHFNMWLAT) the chain is on the extracellular side. Residues 123–143 (ILSILYLLKIGNFSNLIFLGL) form a helical membrane-spanning segment. Residues 144–149 (KRKIKS) lie on the Cytoplasmic side of the membrane. A helical transmembrane segment spans residues 150 to 170 (VFIVVLLASLVLLFPNLITVT). Residues 171-201 (VCETVQANGYRGNLTGKTKRTYFMNLTAMIS) lie on the Extracellular side of the membrane. Residues N183 and N195 are each glycosylated (N-linked (GlcNAc...) asparagine). Residues 202-222 (FTLDNIISFTISMVCFLLLIY) form a helical membrane-spanning segment. At 223–248 (SLCKHLRTMRLYGKGPHNPSASAHIK) the chain is on the cytoplasmic side. A helical membrane pass occupies residues 249–269 (ALQAVISFLLLFSMFILSLII). At 270–283 (SGYNYMKPLNEPVH) the chain is on the extracellular side. The chain crosses the membrane as a helical span at residues 284-304 (LICQLIGTLYPSSHSYVLLWG). The Cytoplasmic portion of the chain corresponds to 305 to 330 (NRRIKLAFVLAMVQVRARLWLKEEKP).

The protein belongs to the G-protein coupled receptor T2R family.

It localises to the membrane. In terms of biological role, putative taste receptor which may play a role in the perception of bitterness. The protein is Taste receptor type 2 member 136 of Rattus norvegicus (Rat).